Reading from the N-terminus, the 251-residue chain is Triosephosphate isomerase (251 aa).

Asn-9 to Lys-11 lines the substrate pocket. The active-site Electrophile is His-95. The Proton acceptor role is filled by Glu-167. Residues Gly-173, Ser-213, and Gly-234–Gly-235 each bind substrate. Phosphoserine is present on Ser-213.

The protein belongs to the triosephosphate isomerase family. Homodimer.

The protein localises to the cytoplasm. It carries out the reaction D-glyceraldehyde 3-phosphate = dihydroxyacetone phosphate. It participates in carbohydrate biosynthesis; gluconeogenesis. It functions in the pathway carbohydrate degradation; glycolysis; D-glyceraldehyde 3-phosphate from glycerone phosphate: step 1/1. Involved in the gluconeogenesis. Catalyzes stereospecifically the conversion of dihydroxyacetone phosphate (DHAP) to D-glyceraldehyde-3-phosphate (G3P). The polypeptide is Triosephosphate isomerase (Shouchella clausii (strain KSM-K16) (Alkalihalobacillus clausii)).